Reading from the N-terminus, the 196-residue chain is dTTP/UTP pyrophosphatase (196 aa).

Residue Asp-72 is the Proton acceptor of the active site.

It belongs to the Maf family. YhdE subfamily. A divalent metal cation is required as a cofactor.

The protein localises to the cytoplasm. The catalysed reaction is dTTP + H2O = dTMP + diphosphate + H(+). It carries out the reaction UTP + H2O = UMP + diphosphate + H(+). Nucleoside triphosphate pyrophosphatase that hydrolyzes dTTP and UTP. May have a dual role in cell division arrest and in preventing the incorporation of modified nucleotides into cellular nucleic acids. This Chlamydia felis (strain Fe/C-56) (Chlamydophila felis) protein is dTTP/UTP pyrophosphatase.